A 121-amino-acid chain; its full sequence is Nitrogenase-stabilizing/protective protein NifW (121 aa).

It belongs to the NifW family. As to quaternary structure, homotrimer; associates with NifD.

In terms of biological role, may protect the nitrogenase Fe-Mo protein from oxidative damage. The sequence is that of Nitrogenase-stabilizing/protective protein NifW from Methylacidiphilum infernorum (isolate V4) (Methylokorus infernorum (strain V4)).